Here is a 408-residue protein sequence, read N- to C-terminus: Epsin-3 (408 aa).

Ser-2 is subject to N-acetylserine. One can recognise an ENTH domain in the interval 24–157 (NVVFNYTEME…SDDNKIRAER (134 aa)). A disordered region spans residues 162–182 (ETAKKYKGVAGGSASADGSLN). 5 positions are modified to phosphoserine: Ser-196, Ser-198, Ser-203, Ser-212, and Ser-223. 2 disordered regions span residues 199-322 (ADFD…ITPA) and 338-408 (TAKA…LLSF). Acidic residues predominate over residues 201–210 (FDSDNEDNED). Polar residues predominate over residues 211 to 231 (GSFSQNGYNDNASRATSTPGQ). Over residues 249-263 (KPSKELIQEDEKKAD) the composition is skewed to basic and acidic residues. The segment covering 264–273 (EEEDDDDEFS) has biased composition (acidic residues). The segment covering 279–317 (VPVTNPANSFNLLNTSPIEGMPATTSSMPFYNSSTTDQG) has biased composition (polar residues). Positions 338-361 (TAKASAEAPSAPKASQAKAAASNP) are enriched in low complexity. 2 stretches are compositionally biased toward polar residues: residues 362–371 (VSNSTTALST) and 388–398 (QQEQNTNNNHT). Residues 399–408 (SSKEIDLLSF) are compositionally biased toward basic and acidic residues.

Interacts with the clathrin adapter GGA2, and VPS27.

The protein resides in the cytoplasm. The protein localises to the golgi apparatus. It localises to the trans-Golgi network membrane. Its subcellular location is the cytoplasmic vesicle. It is found in the clathrin-coated vesicle membrane. Involved in the recruitment of clathrin to the Golgi network and endosomes to form clathrin coated vesicles. Plays a role in the trafficking of clathrin between the Golgi network and endosomes. Binds to membranes enriched in phosphatidylinositol-3,5-bisphosphate (PtdIns(3,5)P2) and, in association with VPS27, is involved in protein sorting at the multivesicular body (MVB). This Saccharomyces cerevisiae (strain ATCC 204508 / S288c) (Baker's yeast) protein is Epsin-3 (ENT3).